A 195-amino-acid polypeptide reads, in one-letter code: Thymidine kinase (195 aa).

Residues 15–22 and 88–91 contribute to the ATP site; these read GSMFSGKS and DEVQ. Glu89 functions as the Proton acceptor in the catalytic mechanism. Residues Cys145, Cys148, Cys183, and Cys186 each contribute to the Zn(2+) site.

The protein belongs to the thymidine kinase family. Homotetramer.

It localises to the cytoplasm. The enzyme catalyses thymidine + ATP = dTMP + ADP + H(+). This Bacillus cereus (strain 03BB102) protein is Thymidine kinase.